The following is a 531-amino-acid chain: NAD(P)H-quinone oxidoreductase chain 4 (531 aa).

Helical transmembrane passes span 9–29 (FPWLSASILFPIGSAFVIPFF), 41–61 (FALSIALITFLITVGSYINGF), 93–113 (MPLILLTSFITALAVLAAWPV), 117–137 (PKLFFFLILVMDGGQIAVFAV), 141–161 (LLFFLTWELELIPVYLLLAIW), 173–193 (FIIYTAGSSIFILLAALAMGF), 217–237 (IFCYVGLLIAFGVKLPIVPLH), 248–268 (TAPVHMLLAGILLKMGGYALL), 282–302 (FAPLLIVLGVVNIIYAALTSF), 311–331 (IAYSSISHMGFVLIGIGSFSS), 337–357 (AMLQMVSHGLIGASLFFLVGA), 381–401 (FALWTACSLASLALPGMSGFV), 422–442 (VVMASLAAIGVILTPIYLLSM), and 469–489 (VYIIACLLLPIIGIGLYPRLV).

It belongs to the complex I subunit 4 family.

It is found in the cellular thylakoid membrane. It catalyses the reaction a plastoquinone + NADH + (n+1) H(+)(in) = a plastoquinol + NAD(+) + n H(+)(out). The enzyme catalyses a plastoquinone + NADPH + (n+1) H(+)(in) = a plastoquinol + NADP(+) + n H(+)(out). Its function is as follows. NDH-1 shuttles electrons from NAD(P)H, via FMN and iron-sulfur (Fe-S) centers, to quinones in the respiratory chain. The immediate electron acceptor for the enzyme in this species is believed to be plastoquinone. Couples the redox reaction to proton translocation (for every two electrons transferred, four hydrogen ions are translocated across the cytoplasmic membrane), and thus conserves the redox energy in a proton gradient. The protein is NAD(P)H-quinone oxidoreductase chain 4 of Prochlorococcus marinus (strain MIT 9301).